A 101-amino-acid polypeptide reads, in one-letter code: Nucleoid-associated protein Bind_0255 (101 aa).

Belongs to the YbaB/EbfC family. In terms of assembly, homodimer.

The protein resides in the cytoplasm. It localises to the nucleoid. Functionally, binds to DNA and alters its conformation. May be involved in regulation of gene expression, nucleoid organization and DNA protection. In Beijerinckia indica subsp. indica (strain ATCC 9039 / DSM 1715 / NCIMB 8712), this protein is Nucleoid-associated protein Bind_0255.